The chain runs to 103 residues: Protein RALF-like 18 (103 aa).

The first 32 residues, 1 to 32 (MMNNMKLLIIAVMIISAALLPALVVGSRPVKC), serve as a signal peptide directing secretion. Residues 33 to 58 (DNCMDGGEKEEIMKMSSGVDVSHRIL) constitute a propeptide, removed in mature form. Cys-92 and Cys-98 are oxidised to a cystine.

It belongs to the plant rapid alkalinization factor (RALF) family. In terms of processing, proteolytically cleaved, probably by S1P, a subtilisin-like serine protease (subtilase).

It localises to the secreted. Its function is as follows. Cell signaling peptide that may regulate plant stress, growth, and development. Mediates a rapid alkalinization of extracellular space by mediating a transient increase in the cytoplasmic Ca(2+) concentration leading to a calcium-dependent signaling events through a cell surface receptor and a concomitant activation of some intracellular mitogen-activated protein kinases. The polypeptide is Protein RALF-like 18 (RALFL18) (Arabidopsis thaliana (Mouse-ear cress)).